Consider the following 101-residue polypeptide: Small ribosomal subunit protein eS24 (101 aa).

It belongs to the eukaryotic ribosomal protein eS24 family.

The sequence is that of Small ribosomal subunit protein eS24 from Methanocaldococcus jannaschii (strain ATCC 43067 / DSM 2661 / JAL-1 / JCM 10045 / NBRC 100440) (Methanococcus jannaschii).